Consider the following 374-residue polypeptide: Putative 12-oxophytodienoate reductase 5 (374 aa).

FMN contacts are provided by residues 30 to 32, A63, and Q105; that span reads PMT. Position 177–180 (177–180) interacts with substrate; that stretch reads HGAN. Y182 acts as the Proton donor in catalysis. Residue R229 coordinates FMN. R270 is a substrate binding site. FMN-binding positions include G300 and 321 to 322; that span reads GR.

It belongs to the NADH:flavin oxidoreductase/NADH oxidase family. FMN is required as a cofactor.

Its function is as follows. Putative oxophytodienoate reductase that may be involved in the biosynthesis or metabolism of oxylipin signaling molecules. This is Putative 12-oxophytodienoate reductase 5 (OPR5) from Oryza sativa subsp. japonica (Rice).